Reading from the N-terminus, the 626-residue chain is DNA mismatch repair protein MutL (626 aa).

Positions 352–399 (QPPSPSFTSRPSSAGYASGSWHPAVSSPRTEWSPQTAHPAHRPLDLGA) are disordered. Polar residues predominate over residues 378 to 387 (SPRTEWSPQT).

This sequence belongs to the DNA mismatch repair MutL/HexB family.

This protein is involved in the repair of mismatches in DNA. It is required for dam-dependent methyl-directed DNA mismatch repair. May act as a 'molecular matchmaker', a protein that promotes the formation of a stable complex between two or more DNA-binding proteins in an ATP-dependent manner without itself being part of a final effector complex. This is DNA mismatch repair protein MutL from Brucella anthropi (strain ATCC 49188 / DSM 6882 / CCUG 24695 / JCM 21032 / LMG 3331 / NBRC 15819 / NCTC 12168 / Alc 37) (Ochrobactrum anthropi).